Here is a 29-residue protein sequence, read N- to C-terminus: Brevinin-2Ra (29 aa).

Residues C23 and C29 are joined by a disulfide bond.

Expressed by the skin glands.

The protein resides in the secreted. Antimicrobial peptide. The polypeptide is Brevinin-2Ra (Pelophylax ridibundus (Marsh frog)).